A 409-amino-acid polypeptide reads, in one-letter code: Tyrosine--tRNA ligase (409 aa).

A 'HIGH' region motif is present at residues 54–63; the sequence is PTAPDIHLGH. The 'KMSKS' region signature appears at 238 to 242; that stretch reads KMSKS. ATP is bound at residue Lys-241. One can recognise an S4 RNA-binding domain in the interval 347-407; that stretch reads MGILHVLRAS…GKRKFARVNL (61 aa).

It belongs to the class-I aminoacyl-tRNA synthetase family. TyrS type 2 subfamily. As to quaternary structure, homodimer.

The protein localises to the cytoplasm. It catalyses the reaction tRNA(Tyr) + L-tyrosine + ATP = L-tyrosyl-tRNA(Tyr) + AMP + diphosphate + H(+). Catalyzes the attachment of tyrosine to tRNA(Tyr) in a two-step reaction: tyrosine is first activated by ATP to form Tyr-AMP and then transferred to the acceptor end of tRNA(Tyr). This Bordetella avium (strain 197N) protein is Tyrosine--tRNA ligase.